The chain runs to 232 residues: Ribose-5-phosphate isomerase A (232 aa).

Substrate contacts are provided by residues 31–34 (TGST), 88–91 (DGAD), and 101–104 (KGGG). The active-site Proton acceptor is Glu-110. Lys-128 provides a ligand contact to substrate.

Belongs to the ribose 5-phosphate isomerase family. In terms of assembly, homodimer.

The catalysed reaction is aldehydo-D-ribose 5-phosphate = D-ribulose 5-phosphate. It functions in the pathway carbohydrate degradation; pentose phosphate pathway; D-ribose 5-phosphate from D-ribulose 5-phosphate (non-oxidative stage): step 1/1. In terms of biological role, catalyzes the reversible conversion of ribose-5-phosphate to ribulose 5-phosphate. In Lactobacillus johnsonii (strain CNCM I-12250 / La1 / NCC 533), this protein is Ribose-5-phosphate isomerase A.